Reading from the N-terminus, the 131-residue chain is Profilin-5 (131 aa).

A disulfide bridge connects residues C13 and C115. Residues 81–97 (VVIRGKKGTGGITIKKT) carry the Involved in PIP2 interaction motif. Position 111 is a phosphothreonine (T111).

Belongs to the profilin family. As to quaternary structure, multimer. Occurs in many kinds of cells as a complex with monomeric actin in a 1:1 ratio. Post-translationally, phosphorylated by MAP kinases. Expressed in vegetative tissues. Present in shoots, roots and coleoptiles. Also detected in endosperm and pollen.

The protein resides in the cytoplasm. It is found in the cytoskeleton. Its activity is regulated as follows. Actin binding is enhanced by calcium Ca(2+). In terms of biological role, binds to actin and affects the structure of the cytoskeleton. At high concentrations, profilin prevents the polymerization of actin, whereas it enhances it at low concentrations. By binding to PIP2, it inhibits the formation of IP3 and DG. Has a high affinity for poly-proline. The chain is Profilin-5 from Zea mays (Maize).